Here is a 198-residue protein sequence, read N- to C-terminus: Ribonuclease HII (198 aa).

In terms of domain architecture, RNase H type-2 spans 2–191 (VLECGVDETG…IRELLVGKDN (190 aa)). A divalent metal cation contacts are provided by Asp-8, Glu-9, and Asp-100.

This sequence belongs to the RNase HII family. Mn(2+) serves as cofactor. It depends on Mg(2+) as a cofactor.

The protein resides in the cytoplasm. The catalysed reaction is Endonucleolytic cleavage to 5'-phosphomonoester.. In terms of biological role, endonuclease that specifically degrades the RNA of RNA-DNA hybrids. The polypeptide is Ribonuclease HII (Desulforamulus reducens (strain ATCC BAA-1160 / DSM 100696 / MI-1) (Desulfotomaculum reducens)).